A 368-amino-acid chain; its full sequence is tRNA/tmRNA (uracil-C(5))-methyltransferase (368 aa).

Residues Q186, Y214, N219, E235, and D295 each contribute to the S-adenosyl-L-methionine site. The Nucleophile role is filled by C320. E354 acts as the Proton acceptor in catalysis.

It belongs to the class I-like SAM-binding methyltransferase superfamily. RNA M5U methyltransferase family. TrmA subfamily.

The enzyme catalyses uridine(54) in tRNA + S-adenosyl-L-methionine = 5-methyluridine(54) in tRNA + S-adenosyl-L-homocysteine + H(+). It catalyses the reaction uridine(341) in tmRNA + S-adenosyl-L-methionine = 5-methyluridine(341) in tmRNA + S-adenosyl-L-homocysteine + H(+). Its function is as follows. Dual-specificity methyltransferase that catalyzes the formation of 5-methyluridine at position 54 (m5U54) in all tRNAs, and that of position 341 (m5U341) in tmRNA (transfer-mRNA). The sequence is that of tRNA/tmRNA (uracil-C(5))-methyltransferase from Aromatoleum aromaticum (strain DSM 19018 / LMG 30748 / EbN1) (Azoarcus sp. (strain EbN1)).